Here is a 199-residue protein sequence, read N- to C-terminus: Imidazole glycerol phosphate synthase subunit HisH (199 aa).

The 198-residue stretch at 2 to 199 (RAVIIDYGVG…LTNVYRWLRK (198 aa)) folds into the Glutamine amidotransferase type-1 domain. The Nucleophile role is filled by C76. Catalysis depends on residues H178 and E180.

Heterodimer of HisH and HisF.

Its subcellular location is the cytoplasm. It carries out the reaction 5-[(5-phospho-1-deoxy-D-ribulos-1-ylimino)methylamino]-1-(5-phospho-beta-D-ribosyl)imidazole-4-carboxamide + L-glutamine = D-erythro-1-(imidazol-4-yl)glycerol 3-phosphate + 5-amino-1-(5-phospho-beta-D-ribosyl)imidazole-4-carboxamide + L-glutamate + H(+). The enzyme catalyses L-glutamine + H2O = L-glutamate + NH4(+). It participates in amino-acid biosynthesis; L-histidine biosynthesis; L-histidine from 5-phospho-alpha-D-ribose 1-diphosphate: step 5/9. Its function is as follows. IGPS catalyzes the conversion of PRFAR and glutamine to IGP, AICAR and glutamate. The HisH subunit catalyzes the hydrolysis of glutamine to glutamate and ammonia as part of the synthesis of IGP and AICAR. The resulting ammonia molecule is channeled to the active site of HisF. This chain is Imidazole glycerol phosphate synthase subunit HisH, found in Sulfolobus acidocaldarius (strain ATCC 33909 / DSM 639 / JCM 8929 / NBRC 15157 / NCIMB 11770).